A 535-amino-acid polypeptide reads, in one-letter code: Xylan 1,3-beta-xylosidase (535 aa).

Aspartate 16 acts as the Proton acceptor in catalysis. The active-site Proton donor is glutamate 189.

The protein belongs to the glycosyl hydrolase 43 family.

It carries out the reaction Hydrolysis of successive xylose residues from the non-reducing termini of (1-&gt;3)-beta-D-xylans.. With respect to regulation, inhibited by Ag(+), Cu(2+), Hg(2+), Mn(2+), Pb(2+), Zn(2+) and p-chloromercuric benzoic acid. Beta-1,3-xylosidase that hydrolyzes beta-1,3-xylooligosaccharides to D-xylose. The sequence is that of Xylan 1,3-beta-xylosidase (xloA) from Vibrio sp.